A 117-amino-acid chain; its full sequence is Putative membrane protein insertion efficiency factor (117 aa).

Belongs to the UPF0161 family.

Its subcellular location is the cell inner membrane. In terms of biological role, could be involved in insertion of integral membrane proteins into the membrane. This chain is Putative membrane protein insertion efficiency factor, found in Nitrobacter winogradskyi (strain ATCC 25391 / DSM 10237 / CIP 104748 / NCIMB 11846 / Nb-255).